A 47-amino-acid polypeptide reads, in one-letter code: Delta-actitoxin-Axm1d (47 aa).

Disulfide bonds link Cys4–Cys44, Cys6–Cys34, and Cys27–Cys45.

The protein belongs to the sea anemone sodium channel inhibitory toxin family. Type I subfamily.

It localises to the secreted. Its subcellular location is the nematocyst. Binds specifically to voltage-gated sodium channels (Nav), thereby delaying their inactivation during signal transduction. Thus it strongly stimulates mammalian cardiac muscle contraction. This chain is Delta-actitoxin-Axm1d, found in Anthopleura xanthogrammica (Giant green sea anemone).